The primary structure comprises 347 residues: NADH-quinone oxidoreductase subunit H (347 aa).

Transmembrane regions (helical) follow at residues 13–33 (LIIA…VAYL), 82–102 (GVFL…WAVI), 115–135 (VGIL…IMGG), 161–181 (IGFV…TDIV), 198–218 (FLDW…ISAL), 248–268 (FLLF…LMTV), 286–306 (VPGI…FAMV), and 325–345 (VFLP…KVFG).

This sequence belongs to the complex I subunit 1 family. In terms of assembly, NDH-1 is composed of 14 different subunits. Subunits NuoA, H, J, K, L, M, N constitute the membrane sector of the complex.

The protein resides in the cell inner membrane. It carries out the reaction a quinone + NADH + 5 H(+)(in) = a quinol + NAD(+) + 4 H(+)(out). NDH-1 shuttles electrons from NADH, via FMN and iron-sulfur (Fe-S) centers, to quinones in the respiratory chain. The immediate electron acceptor for the enzyme in this species is believed to be ubiquinone. Couples the redox reaction to proton translocation (for every two electrons transferred, four hydrogen ions are translocated across the cytoplasmic membrane), and thus conserves the redox energy in a proton gradient. This subunit may bind ubiquinone. This Brucella melitensis biotype 1 (strain ATCC 23456 / CCUG 17765 / NCTC 10094 / 16M) protein is NADH-quinone oxidoreductase subunit H.